Reading from the N-terminus, the 80-residue chain is Exodeoxyribonuclease 7 small subunit (80 aa).

The protein belongs to the XseB family. Heterooligomer composed of large and small subunits.

It localises to the cytoplasm. The enzyme catalyses Exonucleolytic cleavage in either 5'- to 3'- or 3'- to 5'-direction to yield nucleoside 5'-phosphates.. Its function is as follows. Bidirectionally degrades single-stranded DNA into large acid-insoluble oligonucleotides, which are then degraded further into small acid-soluble oligonucleotides. This is Exodeoxyribonuclease 7 small subunit from Aliivibrio fischeri (strain ATCC 700601 / ES114) (Vibrio fischeri).